The chain runs to 262 residues: Leucine-rich repeat-containing protein 18 (262 aa).

7 LRR repeats span residues Gly28 to Leu49, Asp51 to Phe72, Asn74 to Met95, Ser97 to Asn118, Asn122 to Lys144, Glu145 to Pro167, and Lys168 to Val189.

As to expression, exclusively expressed in spermatocytes and roud spermatids within seminiferous tubules during spermatogenesis.

The protein resides in the cytoplasm. In terms of biological role, may be involved in the regulation of spermatogenesis and sperm maturation. The chain is Leucine-rich repeat-containing protein 18 (Lrrc18) from Mus musculus (Mouse).